A 42-amino-acid polypeptide reads, in one-letter code: Photosystem I reaction center subunit IX (42 aa).

A helical transmembrane segment spans residues 8–28; that stretch reads YLSTAPVLFTVWLSFTASFII.

The protein belongs to the PsaJ family.

It is found in the plastid. It localises to the chloroplast thylakoid membrane. May help in the organization of the PsaE and PsaF subunits. The chain is Photosystem I reaction center subunit IX from Rhodomonas salina (Cryptomonas salina).